We begin with the raw amino-acid sequence, 340 residues long: N(4)-(Beta-N-acetylglucosaminyl)-L-asparaginase (340 aa).

An N-terminal signal peptide occupies residues 1–45 (MRIIYKQQTMNNNRRDFIKKLGIATAAIAINPLEAKNLLDTSEPK). Residue Thr-197 is the Nucleophile of the active site. Substrate-binding positions include 225-228 (RVGD) and 248-251 (TGHG).

It belongs to the Ntn-hydrolase family. Heterotetramer of two alpha and two beta chains arranged as a dimer of alpha/beta heterodimers. Post-translationally, cleaved into an alpha and beta chain by autocatalysis; this activates the enzyme. The N-terminal residue of the beta subunit is responsible for the nucleophile hydrolase activity.

Its subcellular location is the periplasm. The enzyme catalyses N(4)-(beta-N-acetyl-D-glucosaminyl)-L-asparagine + H2O = N-acetyl-beta-D-glucosaminylamine + L-aspartate + H(+). Cleaves the GlcNAc-Asn bond which joins oligosaccharides to the peptide of asparagine-linked glycoproteins. Requires that the glycosylated asparagine moiety is not substituted on its N-(R1) and C- (R2) terminus. In Elizabethkingia miricola (Chryseobacterium miricola), this protein is N(4)-(Beta-N-acetylglucosaminyl)-L-asparaginase.